A 1394-amino-acid chain; its full sequence is Cyclic nucleotide-gated channel beta-1 (1394 aa).

Disordered regions lie at residues Met1 to Ser95, Val112 to Ala253, and Val271 to Ser675. Over Met1–Ile762 the chain is Cytoplasmic. Polar residues-rich tracts occupy residues Pro68–Val86 and Ala116–Ile125. Composition is skewed to basic and acidic residues over residues Glu300 to His312 and Asp336 to Glu355. Residues Glu356–Glu387 are compositionally biased toward acidic residues. Over residues Glu388–Lys408 the composition is skewed to basic and acidic residues. Over residues Glu409 to Asp418 the composition is skewed to acidic residues. The span at Glu419 to Glu433 shows a compositional bias: basic and acidic residues. Composition is skewed to acidic residues over residues Glu452–Gln464 and Asp481–Asp490. Composition is skewed to low complexity over residues Glu493 to Ala508 and Glu529 to Gln554. Positions Asp654 to Ser675 are enriched in polar residues. Residues Ala671–Arg681 are calmodulin-binding CaM1. The short motif at Leu682–Arg692 is the IQ-like element. The segment at Lys699–Ala732 is disordered. The helical transmembrane segment at Asp763–Ala793 threads the bilayer. At Phe794–Thr798 the chain is on the extracellular side. Residues Pro799–Met825 traverse the membrane as a helical segment. The Cytoplasmic segment spans residues Arg826–Thr837. A helical membrane pass occupies residues Asp838–Pro861. The Extracellular portion of the chain corresponds to Leu862–Asn872. A helical transmembrane segment spans residues Pro873–Phe887. The Cytoplasmic portion of the chain corresponds to Glu888 to Ala900. The segment at Ala900–Ala999 is ion conduction pathway. The helical transmembrane segment at Tyr901–Leu922 threads the bilayer. Topologically, residues Tyr923–Gly931 are extracellular. Helical transmembrane passes span Leu932–Phe974 and Gln975–Ala1002. Positions Thr959–Gly962 are selectivity filter. Topologically, residues Gly1003–Glu1394 are cytoplasmic. The interval Arg1082 to Leu1198 is cyclic nucleotide-binding domain. 5 residues coordinate 3',5'-cyclic GMP: Gly1143, Glu1144, Ser1146, Arg1156, and Thr1157. 3',5'-cyclic AMP is bound at residue Arg1156. Residues Gln1261–Gln1267 are calmodulin-binding CaM2. A disordered region spans residues Leu1265–Glu1394. Pro residues predominate over residues Glu1285–Ala1326. Composition is skewed to basic and acidic residues over residues Glu1329–Val1345 and Val1364–Glu1376.

This sequence belongs to the cyclic nucleotide-gated cation channel (TC 1.A.1.5) family. CNGB1 subfamily. The rod cyclic nucleotide-gated channel is a heterotetramer composed of CNGA1 and CNGB1 subunits with 3:1 stoichiometry. CNGA1:CNGB1 channel binds Ca(2+)-bound CALM1 via CaM1 and CaM2 regions of the CNGB1 subunit; this interaction modulates the affinity of the channel for cNMPs in response to intracellular Ca(2+) levels. The olfactory cyclic nucleotide-gated channel is a heterotetramer composed of CNGA2, CNGA4 and CNGB1 subunits with 2:1:1 stoichiometry. As to expression, retina, testis, kidney, heart and brain.

It is found in the membrane. It carries out the reaction Ca(2+)(in) = Ca(2+)(out). It catalyses the reaction Na(+)(in) = Na(+)(out). The enzyme catalyses K(+)(in) = K(+)(out). The catalysed reaction is NH4(+)(in) = NH4(+)(out). It carries out the reaction Rb(+)(in) = Rb(+)(out). It catalyses the reaction Li(+)(in) = Li(+)(out). The enzyme catalyses Cs(+)(in) = Cs(+)(out). Functionally, pore-forming subunit of the rod cyclic nucleotide-gated channel. Mediates rod photoresponses at dim light converting transient changes in intracellular cGMP levels into electrical signals. In the dark, cGMP levels are high and keep the channel open enabling a steady inward current carried by Na(+) and Ca(2+) ions that leads to membrane depolarization and neurotransmitter release from synaptic terminals. Upon photon absorption cGMP levels decline leading to channel closure and membrane hyperpolarization that ultimately slows neurotransmitter release and signals the presence of light, the end point of the phototransduction cascade. Pore-forming subunit of the olfactory cyclic nucleotide-gated channel. Operates in the cilia of olfactory sensory neurons where chemical stimulation of the odorant is converted to an electrical signal. Mediates odorant-induced cAMP-dependent Ca(2+) influx triggering neuron depolarization. The rise of intracellular Ca(2+) levels potentiates the olfactory response by activating Ca(2+)-dependent Cl(-) channels, but it also serves as a negative feedback signal to desensitize the channel for rapid adaptation to odorants. Conducts cGMP- and cAMP-gated ion currents, with permeability for monovalent and divalent cations. The selectivity for Ca(2+) over Na(+) increases with cGMP concentrations, whereas the selectivity among monovalent ions is independent of the cGMP levels. In Bos taurus (Bovine), this protein is Cyclic nucleotide-gated channel beta-1.